We begin with the raw amino-acid sequence, 160 residues long: MRAVSKKKKTPENVIALNRKARFEFHIEETMEAGLALEGWEVKSLRAGRVNLQEAYVLIRRGEAWLIGCTITPLPTASTHIKPDPTRTRRLLLHKKEIARLTGAADREGYTVVPLDLHWKRGKAKLSIGLAKGKKKHDKRADQKEQDWQRQKQRLMKHKV.

The interval Leu-130–Val-160 is disordered. The span at Lys-139 to Arg-150 shows a compositional bias: basic and acidic residues. The span at Gln-151–Val-160 shows a compositional bias: basic residues.

This sequence belongs to the SmpB family.

It is found in the cytoplasm. In terms of biological role, required for rescue of stalled ribosomes mediated by trans-translation. Binds to transfer-messenger RNA (tmRNA), required for stable association of tmRNA with ribosomes. tmRNA and SmpB together mimic tRNA shape, replacing the anticodon stem-loop with SmpB. tmRNA is encoded by the ssrA gene; the 2 termini fold to resemble tRNA(Ala) and it encodes a 'tag peptide', a short internal open reading frame. During trans-translation Ala-aminoacylated tmRNA acts like a tRNA, entering the A-site of stalled ribosomes, displacing the stalled mRNA. The ribosome then switches to translate the ORF on the tmRNA; the nascent peptide is terminated with the 'tag peptide' encoded by the tmRNA and targeted for degradation. The ribosome is freed to recommence translation, which seems to be the essential function of trans-translation. In Alkalilimnicola ehrlichii (strain ATCC BAA-1101 / DSM 17681 / MLHE-1), this protein is SsrA-binding protein.